The following is a 1576-amino-acid chain: DExH-box ATP-dependent RNA helicase DExH2 (1576 aa).

The region spanning 15 to 78 (EATGAWATKV…ERRLSLFKGD (64 aa)) is the R3H domain. In terms of domain architecture, Helicase ATP-binding spans 227–396 (ISAVESNQVV…FGGCPVVRVP (170 aa)). 240–247 (GETGCGKT) contributes to the ATP binding site. The DEIH box motif lies at 343-346 (DEIH). The Helicase C-terminal domain maps to 561–735 (LIVKLMKKIC…ELCLQVKMLD (175 aa)). Disordered regions lie at residues 1137 to 1165 (ATSPRDDIPSTNPNELREHDPNTTPMGSK), 1177 to 1223 (MEES…SLNN), and 1260 to 1576 (DMGN…PSDQ). Residues 1281-1301 (PNSANSMDLGNMEENTPSDLA) show a composition bias toward polar residues. Residues 1305 to 1319 (KKKEPKSVSKLDLGS) show a composition bias toward basic and acidic residues. The PH1 signature appears at 1349–1360 (KQPEKKRSRSKK). Residues 1352–1363 (EKKRSRSKKRKS) show a composition bias toward basic residues. Positions 1381–1412 (ANENEQTEPKSANNLDLGNMKENTPSDLANEN) are enriched in polar residues. The short motif at 1454–1465 (KQPKKKRSRSKK) is the PH2 element. Over residues 1455–1467 (QPKKKRSRSKKCK) the composition is skewed to basic residues. Residues 1490–1508 (EQKDPESVNRLDPGKEKES) show a composition bias toward basic and acidic residues. Positions 1509–1524 (IPSNLVSGNEQPDSNT) are enriched in polar residues. Residues 1528–1537 (KKPKKKKRKL) are compositionally biased toward basic residues. The Nuclear localization signal signature appears at 1530–1537 (PKKKKRKL). The span at 1540–1562 (NFDSVNNMEEKMPSTNVLSQGNK) shows a compositional bias: polar residues.

Belongs to the DExH box helicase family. In terms of assembly, homodimer.

It is found in the nucleus. The enzyme catalyses ATP + H2O = ADP + phosphate + H(+). May function as an ATP-dependent RNA/DNA helicase. Binds DNA in vitro in a non-specific manner. The protein is DExH-box ATP-dependent RNA helicase DExH2 of Arabidopsis thaliana (Mouse-ear cress).